The sequence spans 587 residues: Aspartate--tRNA ligase (587 aa).

Residue E174 participates in L-aspartate binding. An aspartate region spans residues Q198–K201. Position 220 (R220) interacts with L-aspartate. Residues R220–E222 and Q229 contribute to the ATP site. H443 serves as a coordination point for L-aspartate. Residue E477 participates in ATP binding. L-aspartate is bound at residue R484. G529–R532 serves as a coordination point for ATP.

This sequence belongs to the class-II aminoacyl-tRNA synthetase family. Type 1 subfamily. In terms of assembly, homodimer.

It localises to the cytoplasm. The enzyme catalyses tRNA(Asp) + L-aspartate + ATP = L-aspartyl-tRNA(Asp) + AMP + diphosphate. In terms of biological role, catalyzes the attachment of L-aspartate to tRNA(Asp) in a two-step reaction: L-aspartate is first activated by ATP to form Asp-AMP and then transferred to the acceptor end of tRNA(Asp). The protein is Aspartate--tRNA ligase of Streptococcus pneumoniae (strain Hungary19A-6).